We begin with the raw amino-acid sequence, 553 residues long: Solute carrier family 22 member 12 (553 aa).

A helical transmembrane segment spans residues 9 to 29 (LVGGLGRFQVLQTMALMVSIM). 2 N-linked (GlcNAc...) asparagine glycosylation sites follow: asparagine 56 and asparagine 102. Transmembrane regions (helical) follow at residues 146 to 166 (PMAQ…CGPA), 174 to 194 (LVLT…AFAP), 195 to 215 (AFPV…GVMM), 232 to 252 (LVMT…AAVA), 260 to 280 (LLQL…WWLA), 351 to 371 (CIST…ALDL), 378 to 398 (IFLL…GALL), 407 to 427 (PTLA…TLVP), 435 to 455 (SALA…ITIY), 466 to 486 (MTAV…GPLV), and 495 to 515 (WLPL…ALLL). Position 542 is a phosphothreonine (threonine 542).

The protein belongs to the major facilitator (TC 2.A.1) superfamily. Organic cation transporter (TC 2.A.1.19) family. Interacts with PDZK1. N-glycosylated. As to expression, detected in kidney (at protein level). Detected in fetal and adult kidney. Detected in epithelial cells of proximal tubules in renal cortex.

It localises to the apical cell membrane. The enzyme catalyses urate(out) + (S)-lactate(in) = urate(in) + (S)-lactate(out). It carries out the reaction nicotinate(in) + urate(out) = nicotinate(out) + urate(in). It catalyses the reaction urate(out) + n chloride(in) = urate(in) + n chloride(out). The catalysed reaction is orotate(out) + nicotinate(in) = orotate(in) + nicotinate(out). In terms of biological role, electroneutral antiporter that translocates urate across the apical membrane of proximal tubular cells in exchange for monovalent organic or inorganic anions. Involved in renal reabsorption of urate and helps maintaining blood levels of uric acid. Mediates urate uptake by an exchange with organic anions such as (S)-lactate and nicotinate, and inorganic anion Cl(-). Other inorganic anions such as Br(-), I(-) and NO3(-) may also act as counteranions that exchange for urate. Also mediates orotate tubular uptake coupled with nicotinate efflux and to a lesser extent with lactate efflux, therefore displaying a potential role in orotate renal reabsorption. Orotate transport is Cl(-)-dependent. This chain is Solute carrier family 22 member 12, found in Homo sapiens (Human).